A 429-amino-acid chain; its full sequence is Adenylosuccinate synthetase (429 aa).

Residues 12–18 (GDEGKGK) and 40–42 (GHT) each bind GTP. Aspartate 13 functions as the Proton acceptor in the catalytic mechanism. 2 residues coordinate Mg(2+): aspartate 13 and glycine 40. IMP is bound by residues 13–16 (DEGK), 38–41 (NAGH), threonine 128, arginine 142, glutamine 223, threonine 238, and arginine 302. Histidine 41 (proton donor) is an active-site residue. A substrate-binding site is contributed by 298-304 (VNTGRKR). GTP contacts are provided by residues arginine 304, 330-332 (KLD), and 412-414 (GVG).

Belongs to the adenylosuccinate synthetase family. Homodimer. It depends on Mg(2+) as a cofactor.

Its subcellular location is the cytoplasm. It catalyses the reaction IMP + L-aspartate + GTP = N(6)-(1,2-dicarboxyethyl)-AMP + GDP + phosphate + 2 H(+). The protein operates within purine metabolism; AMP biosynthesis via de novo pathway; AMP from IMP: step 1/2. Plays an important role in the de novo pathway of purine nucleotide biosynthesis. Catalyzes the first committed step in the biosynthesis of AMP from IMP. In Corynebacterium diphtheriae (strain ATCC 700971 / NCTC 13129 / Biotype gravis), this protein is Adenylosuccinate synthetase.